The sequence spans 124 residues: Alkaline proteinase inhibitor (124 aa).

An N-terminal signal peptide occupies residues 1–24; it reads MKGTLTRAALAAGGMMVTSAVMAG. Cys47 and Cys70 are joined by a disulfide.

The protein belongs to the protease inhibitor I38 family. As to quaternary structure, monomer.

The protein localises to the periplasm. Its function is as follows. Inhibitor of the alkaline protease. Inhibits SMP by formation of a non-covalent complex with a molar ratio of 1:1 and shows a high specificity. This Serratia marcescens protein is Alkaline proteinase inhibitor (inh).